Consider the following 1662-residue polypeptide: Cortactin-binding protein 2 (1662 aa).

4 disordered regions span residues 1–23, 202–235, 365–439, and 453–477; these read MATD…AGAA, KKKT…EFDT, IGVS…LHPG, and GNAN…SPTS. Positions 118-275 form a coiled coil; sequence RKMQERMSAQ…EQLKRGSDSK (158 aa). Low complexity predominate over residues 385-395; it reads PSTGSTPDPTS. The segment covering 404-421 has biased composition (polar residues); the sequence is AAPSTAQTPGITPQNSQA. Arg-497 is modified (asymmetric dimethylarginine). Residues 498–615 are disordered; the sequence is FTGPQAGAPP…SSPQLPPKPS (118 aa). Polar residues-rich tracts occupy residues 516-529 and 582-592; these read DVST…TSVK and TVASPPSSLPQ. 5 ANK repeats span residues 708-738, 742-771, 775-804, 808-837, and 841-870; these read GRPT…DINY, DGHS…QVNA, NGFT…NINH, GGQT…DRSV, and DGWT…PAHG. Residues 871 to 897 form a disordered region; sequence NSFSEEESESGVFDLDEGEESPEGKSK. A compositionally biased stretch (acidic residues) spans 874 to 891; it reads SEEESESGVFDLDEGEES. The stretch at 911 to 941 is one ANK 6 repeat; that stretch reads EGWTAAHIAASKGFKNCLEILCRHGGLETER. A disordered region spans residues 1446–1473; that stretch reads KKKGESGAWRKVNTSPRRKSGRFSLPTW. Ser-1523 is modified (phosphoserine). The segment at 1614–1662 is disordered; sequence VPRSKVTQCSQNTKRSSSSSNTRQIEINNNSKEENWNLHKNEHLEKPNK. Residues 1623–1637 are compositionally biased toward low complexity; sequence SQNTKRSSSSSNTRQ. Positions 1644-1662 are enriched in basic and acidic residues; that stretch reads SKEENWNLHKNEHLEKPNK.

As to quaternary structure, interacts with CTTN/cortactin SH3 domain. Interacts with STRN, STRN4/zinedin and MOB4/phocein; this interactions mediate the association with the STRIPAK core complex and may regulate dendritic spine distribution of the STRIPAK complex in hippocampal neurons. Activation of glutamate receptors weakens the interaction with STRN and STRN4.

It localises to the cytoplasm. The protein localises to the cell cortex. Its subcellular location is the cell projection. The protein resides in the dendritic spine. Regulates the dendritic spine distribution of CTTN/cortactin in hippocampal neurons, and thus controls dendritic spinogenesis and dendritic spine maintenance. Associates with the striatin-interacting phosphatase and kinase (STRIPAK) core complex to regulate dendritic spine distribution of the STRIPAK complex in hippocampal neurons. In Callithrix jacchus (White-tufted-ear marmoset), this protein is Cortactin-binding protein 2 (CTTNBP2).